Consider the following 139-residue polypeptide: General odorant-binding protein 56a (139 aa).

The signal sequence occupies residues 1–19; sequence MNSYFVIALSALFVTLAVG. A glycan (N-linked (GlcNAc...) asparagine) is linked at Asn-23. Intrachain disulfides connect Cys-39/Cys-71, Cys-67/Cys-118, and Cys-109/Cys-127.

The protein belongs to the PBP/GOBP family. In terms of tissue distribution, expressed in ventral pits of larvae. In adults, it is not specifically expressed in chemosensory organs. Also expressed in stalk cells at the proximal tip of the wing disk.

Its subcellular location is the secreted. Functionally, present in the aqueous fluid surrounding olfactory sensory dendrites and are thought to aid in the capture and transport of hydrophobic odorants into and through this fluid. The polypeptide is General odorant-binding protein 56a (Obp56a) (Drosophila melanogaster (Fruit fly)).